The chain runs to 89 residues: Small ribosomal subunit protein bS16c (89 aa).

It belongs to the bacterial ribosomal protein bS16 family.

It is found in the plastid. The protein resides in the chloroplast. The polypeptide is Small ribosomal subunit protein bS16c (Glycine max (Soybean)).